The chain runs to 165 residues: Histone H1-like protein HC2 (165 aa).

Basic residues-rich tracts occupy residues 1 to 50 (MLGV…KTVA) and 59 to 80 (PVAK…KKTV). Residues 1 to 80 (MLGVQKKRST…VRKVAAKKTV (80 aa)) form a disordered region.

The protein belongs to the histone H1/H5 family. HCT subfamily.

Its function is as follows. Might have a role in establishing the nucleoid structure of elementary bodies. In Chlamydia trachomatis, this protein is Histone H1-like protein HC2 (hctB).